The sequence spans 457 residues: Adenylosuccinate synthetase isozyme 2 B (457 aa).

Residues 40–46 (GDEGKGK) and 68–70 (GHT) each bind GTP. The active-site Proton acceptor is Asp41. Positions 41 and 68 each coordinate Mg(2+). Position 41 (Asp41) interacts with substrate. Residues 41–44 (DEGK), 66–69 (NAGH), Thr163, Arg177, Asn256, Thr271, and Arg335 each bind IMP. Catalysis depends on His69, which acts as the Proton donor. Residue 331 to 337 (VTTGRKR) coordinates substrate. GTP-binding positions include Arg337, 363–365 (KLD), and 445–448 (GVGK).

Belongs to the adenylosuccinate synthetase family. Homodimer. Mg(2+) is required as a cofactor.

The protein resides in the cytoplasm. The protein localises to the mitochondrion. It carries out the reaction IMP + L-aspartate + GTP = N(6)-(1,2-dicarboxyethyl)-AMP + GDP + phosphate + 2 H(+). It functions in the pathway purine metabolism; AMP biosynthesis via de novo pathway; AMP from IMP: step 1/2. Its activity is regulated as follows. Inhibited competitively by AMP and IMP and non-competitively by fructose 1,6-bisphosphate. Plays an important role in the de novo pathway and in the salvage pathway of purine nucleotide biosynthesis. Catalyzes the first committed step in the biosynthesis of AMP from IMP. This chain is Adenylosuccinate synthetase isozyme 2 B (adss2-b), found in Xenopus tropicalis (Western clawed frog).